The sequence spans 97 residues: Insertion element IS2 uncharacterized 11.1 kDa protein (97 aa).

The sequence is that of Insertion element IS2 uncharacterized 11.1 kDa protein from Escherichia coli.